We begin with the raw amino-acid sequence, 571 residues long: Proline--tRNA ligase (571 aa).

This sequence belongs to the class-II aminoacyl-tRNA synthetase family. ProS type 1 subfamily. Homodimer.

The protein resides in the cytoplasm. The enzyme catalyses tRNA(Pro) + L-proline + ATP = L-prolyl-tRNA(Pro) + AMP + diphosphate. Functionally, catalyzes the attachment of proline to tRNA(Pro) in a two-step reaction: proline is first activated by ATP to form Pro-AMP and then transferred to the acceptor end of tRNA(Pro). As ProRS can inadvertently accommodate and process non-cognate amino acids such as alanine and cysteine, to avoid such errors it has two additional distinct editing activities against alanine. One activity is designated as 'pretransfer' editing and involves the tRNA(Pro)-independent hydrolysis of activated Ala-AMP. The other activity is designated 'posttransfer' editing and involves deacylation of mischarged Ala-tRNA(Pro). The misacylated Cys-tRNA(Pro) is not edited by ProRS. The sequence is that of Proline--tRNA ligase from Actinobacillus pleuropneumoniae serotype 5b (strain L20).